A 226-amino-acid chain; its full sequence is V-type proton ATPase subunit E (226 aa).

The protein belongs to the V-ATPase E subunit family. As to quaternary structure, V-ATPase is a heteromultimeric enzyme made up of two complexes: the ATP-hydrolytic V1 complex and the proton translocation V0 complex. The V1 complex consists of three catalytic AB heterodimers that form a heterohexamer, three peripheral stalks each consisting of EG heterodimers, one central rotor including subunits D and F, and the regulatory subunits C and H. The proton translocation complex V0 consists of the proton transport subunit a, a ring of proteolipid subunits c9c'', rotary subunit d, subunits e and f, and the accessory subunits vah-19/Ac45 and vah-20/PRR. Expressed in the excretory cell and syncytial hypodermal cells (at protein level). Expressed in the intestine (at protein level).

It is found in the cytoplasm. It localises to the apical cell membrane. Functionally, subunit of the V1 complex of vacuolar(H+)-ATPase (V-ATPase), a multisubunit enzyme composed of a peripheral complex (V1) that hydrolyzes ATP and a membrane integral complex (V0) that translocates protons. V-ATPase is responsible for acidifying and maintaining the pH of intracellular compartments and in some cell types, is targeted to the plasma membrane, where it is responsible for acidifying the extracellular environment. Regulates pH homeostasis in the intestine. Probably by regulating cytoplasmic pH, required for cell survival in the intestine and hypodermis. Involved in receptor-mediated endocytosis. Involved in embryogenesis and larval development. The polypeptide is V-type proton ATPase subunit E (Caenorhabditis elegans).